An 831-amino-acid polypeptide reads, in one-letter code: Periplasmic nitrate reductase (831 aa).

The tat-type signal signal peptide spans 1–31; that stretch reads MTISRRDLLKAQAAGIAAMAANIPLSSQAPA. Positions 41–97 constitute a 4Fe-4S Mo/W bis-MGD-type domain; sequence ITWSKAPCRFCGTGCGVMVGVKEGRVVATHGDLLAEVNRGLNCVKGYFLSKIMYGAD. [4Fe-4S] cluster is bound by residues Cys48, Cys51, Cys55, and Cys83. Residues Lys85, Gln152, Asn177, Cys181, 214–221, 245–249, 264–266, Met375, Gln379, Asn485, 511–512, Lys534, Asp561, and 721–730 each bind Mo-bis(molybdopterin guanine dinucleotide); these read WGSNMAEM, STFTH, GTD, SD, and TGRVLEHWHS. Trp797 contacts substrate. Residues Asn805 and Lys822 each contribute to the Mo-bis(molybdopterin guanine dinucleotide) site.

It belongs to the prokaryotic molybdopterin-containing oxidoreductase family. NasA/NapA/NarB subfamily. In terms of assembly, component of the periplasmic nitrate reductase NapAB complex composed of NapA and NapB. The cofactor is [4Fe-4S] cluster. It depends on Mo-bis(molybdopterin guanine dinucleotide) as a cofactor. Post-translationally, predicted to be exported by the Tat system. The position of the signal peptide cleavage has not been experimentally proven.

It is found in the periplasm. It carries out the reaction 2 Fe(II)-[cytochrome] + nitrate + 2 H(+) = 2 Fe(III)-[cytochrome] + nitrite + H2O. Catalytic subunit of the periplasmic nitrate reductase complex NapAB. Receives electrons from NapB and catalyzes the reduction of nitrate to nitrite. The chain is Periplasmic nitrate reductase from Paracoccus pantotrophus (Thiosphaera pantotropha).